We begin with the raw amino-acid sequence, 134 residues long: Large ribosomal subunit protein bL19 (134 aa).

Residues 110–134 (ARLHQEEGPSSAAPASTPPAAAPQA) form a disordered region. Pro residues predominate over residues 125–134 (STPPAAAPQA).

It belongs to the bacterial ribosomal protein bL19 family.

In terms of biological role, this protein is located at the 30S-50S ribosomal subunit interface and may play a role in the structure and function of the aminoacyl-tRNA binding site. In Anaeromyxobacter sp. (strain Fw109-5), this protein is Large ribosomal subunit protein bL19.